The sequence spans 876 residues: Alanine--tRNA ligase (876 aa).

The residue at position 74 (Lys-74) is an N6-acetyllysine. Residues His-564, His-568, Cys-666, and His-670 each coordinate Zn(2+).

It belongs to the class-II aminoacyl-tRNA synthetase family. Homotetramer. It depends on Zn(2+) as a cofactor.

Its subcellular location is the cytoplasm. The enzyme catalyses tRNA(Ala) + L-alanine + ATP = L-alanyl-tRNA(Ala) + AMP + diphosphate. Catalyzes the attachment of alanine to tRNA(Ala) in a two-step reaction: alanine is first activated by ATP to form Ala-AMP and then transferred to the acceptor end of tRNA(Ala). Also edits incorrectly charged Ser-tRNA(Ala) and Gly-tRNA(Ala) via its editing domain. The protein is Alanine--tRNA ligase of Shigella dysenteriae serotype 1 (strain Sd197).